A 341-amino-acid polypeptide reads, in one-letter code: Putative [LysW]-lysine/[LysW]-ornithine hydrolase (341 aa).

His-62 serves as a coordination point for Zn(2+). Asp-64 is a catalytic residue. Asp-86 is a binding site for Zn(2+). Glu-115 serves as the catalytic Proton acceptor. Positions 116, 140, and 309 each coordinate Zn(2+).

The protein belongs to the peptidase M20A family. LysK subfamily. It depends on Zn(2+) as a cofactor. Co(2+) serves as cofactor.

The protein resides in the cytoplasm. The enzyme catalyses [amino-group carrier protein]-C-terminal-gamma-(L-lysyl)-L-glutamate + H2O = [amino-group carrier protein]-C-terminal-L-glutamate + L-lysine. It carries out the reaction [amino-group carrier protein]-C-terminal-gamma-(L-ornithyl)-L-glutamate + H2O = [amino-group carrier protein]-C-terminal-L-glutamate + L-ornithine. It functions in the pathway amino-acid biosynthesis; L-lysine biosynthesis via AAA pathway; L-lysine from L-alpha-aminoadipate (Thermus route): step 5/5. It participates in amino-acid biosynthesis; L-arginine biosynthesis. Catalyzes the release of L-lysine from [LysW]-gamma-L-lysine and the release of L-ornithine from [LysW]-L-ornithine. In Pyrobaculum aerophilum (strain ATCC 51768 / DSM 7523 / JCM 9630 / CIP 104966 / NBRC 100827 / IM2), this protein is Putative [LysW]-lysine/[LysW]-ornithine hydrolase.